The chain runs to 103 residues: Histone H4, major (103 aa).

The segment covering 1-12 (MAGGKGGKGMGK) has biased composition (gly residues). Positions 1–29 (MAGGKGGKGMGKVGAKRHSKRSNKASIEG) are disordered. Residues lysine 5, lysine 8, lysine 12, and lysine 16 each carry the N6-acetyllysine modification. A compositionally biased stretch (basic residues) spans 14–23 (GAKRHSKRSN). The DNA-binding element occupies 16–21 (KRHSKR).

The protein belongs to the histone H4 family. As to quaternary structure, the nucleosome is a histone octamer containing two molecules each of H2A, H2B, H3 and H4 assembled in one H3-H4 heterotetramer and two H2A-H2B heterodimers. The octamer wraps approximately 147 bp of DNA.

The protein localises to the nucleus. It is found in the chromosome. In terms of biological role, core component of nucleosome. Nucleosomes wrap and compact DNA into chromatin, limiting DNA accessibility to the cellular machineries which require DNA as a template. Histones thereby play a central role in transcription regulation, DNA repair, DNA replication and chromosomal stability. DNA accessibility is regulated via a complex set of post-translational modifications of histones, also called histone code, and nucleosome remodeling. The sequence is that of Histone H4, major from Tetrahymena pyriformis.